Consider the following 216-residue polypeptide: EFGSYVYLGEMITNIPFPPDSPIEDRCGSCNICVDSCPTGALVQGGQLDSKKCIAFLTQTKGFLPDEYRGKIGNRLYGCDTCQLVCPENKGKDFHIHSEMEPDPEIAKPKLKPLLHISNREFKEKFGHIAGSWRGKKPIQRNAIIALAHYKDRTALPDLIKLMHEDSRPIIRGTAAWAIGRIGDQSVLFELEKALEKEQDEEVKNEIVKGIEMLKA.

Residues 18–47 (PPDSPIEDRCGSCNICVDSCPTGALVQGGQ) form the 4Fe-4S ferredoxin-type domain. 7 residues coordinate [4Fe-4S] cluster: cysteine 27, cysteine 30, cysteine 33, cysteine 37, cysteine 79, cysteine 82, and cysteine 86.

This is an uncharacterized protein from Geobacillus stearothermophilus (Bacillus stearothermophilus).